The primary structure comprises 1168 residues: Transcription-repair-coupling factor (1168 aa).

One can recognise a Helicase ATP-binding domain in the interval aspartate 633–isoleucine 794. Position 646 to 653 (glycine 646 to threonine 653) interacts with ATP. The DEEQ box signature appears at aspartate 747–glutamine 750. Residues valine 808–asparagine 969 form the Helicase C-terminal domain.

In the N-terminal section; belongs to the UvrB family. The protein in the C-terminal section; belongs to the helicase family. RecG subfamily.

The protein localises to the cytoplasm. In terms of biological role, couples transcription and DNA repair by recognizing RNA polymerase (RNAP) stalled at DNA lesions. Mediates ATP-dependent release of RNAP and its truncated transcript from the DNA, and recruitment of nucleotide excision repair machinery to the damaged site. This Staphylococcus aureus (strain Mu50 / ATCC 700699) protein is Transcription-repair-coupling factor.